Consider the following 98-residue polypeptide: Co-chaperonin GroES 1 (98 aa).

It belongs to the GroES chaperonin family. Heptamer of 7 subunits arranged in a ring. Interacts with the chaperonin GroEL.

It is found in the cytoplasm. Together with the chaperonin GroEL, plays an essential role in assisting protein folding. The GroEL-GroES system forms a nano-cage that allows encapsulation of the non-native substrate proteins and provides a physical environment optimized to promote and accelerate protein folding. GroES binds to the apical surface of the GroEL ring, thereby capping the opening of the GroEL channel. The chain is Co-chaperonin GroES 1 from Rhodopseudomonas palustris (strain ATCC BAA-98 / CGA009).